We begin with the raw amino-acid sequence, 389 residues long: 26S proteasome regulatory subunit 10B (389 aa).

Lys-72 is subject to N6-acetyllysine. Residue Gly-174–Thr-181 participates in ATP binding. Lys-206 is modified (N6-acetyllysine). Ser-244 is modified (phosphoserine).

The protein belongs to the AAA ATPase family. Component of the 19S proteasome regulatory particle complex. The 26S proteasome consists of a 20S core particle (CP) and two 19S regulatory subunits (RP). The regulatory particle is made of a lid composed of 9 subunits, a base containing 6 ATPases including PSMC6 and few additional components. Interacts with PAAF1.

It localises to the cytoplasm. Its subcellular location is the nucleus. In terms of biological role, component of the 26S proteasome, a multiprotein complex involved in the ATP-dependent degradation of ubiquitinated proteins. This complex plays a key role in the maintenance of protein homeostasis by removing misfolded or damaged proteins, which could impair cellular functions, and by removing proteins whose functions are no longer required. Therefore, the proteasome participates in numerous cellular processes, including cell cycle progression, apoptosis, or DNA damage repair. PSMC6 belongs to the heterohexameric ring of AAA (ATPases associated with diverse cellular activities) proteins that unfolds ubiquitinated target proteins that are concurrently translocated into a proteolytic chamber and degraded into peptides. The protein is 26S proteasome regulatory subunit 10B (PSMC6) of Homo sapiens (Human).